A 228-amino-acid polypeptide reads, in one-letter code: Ribulose-phosphate 3-epimerase (228 aa).

Ser-12 lines the substrate pocket. Residues His-37, Asp-39, and His-70 each contribute to the a divalent metal cation site. Asp-39 serves as the catalytic Proton acceptor. Substrate is bound by residues His-70, 146 to 149, 176 to 178, and 198 to 199; these read GFGG, DGG, and GS. A divalent metal cation is bound at residue Asp-176. Catalysis depends on Asp-176, which acts as the Proton donor.

Belongs to the ribulose-phosphate 3-epimerase family. Requires a divalent metal cation as cofactor.

It catalyses the reaction D-ribulose 5-phosphate = D-xylulose 5-phosphate. It participates in carbohydrate degradation. Its function is as follows. Catalyzes the reversible epimerization of D-ribulose 5-phosphate to D-xylulose 5-phosphate. The chain is Ribulose-phosphate 3-epimerase from Rhodobacter capsulatus (Rhodopseudomonas capsulata).